Here is a 331-residue protein sequence, read N- to C-terminus: ADP-L-glycero-D-manno-heptose-6-epimerase (331 aa).

NADP(+) is bound by residues 11–12, 32–33, Lys39, Lys54, 75–79, and Asn92; these read FI, DN, and EGACS. Catalysis depends on Tyr139, which acts as the Proton acceptor. Residue Lys143 participates in NADP(+) binding. Residue Asn168 coordinates substrate. 2 residues coordinate NADP(+): Val169 and Lys177. Lys177 acts as the Proton acceptor in catalysis. Substrate-binding positions include Arg179, His186, 200–203, Arg213, and Tyr292; that span reads FGEY.

Belongs to the NAD(P)-dependent epimerase/dehydratase family. HldD subfamily. In terms of assembly, homopentamer. Requires NADP(+) as cofactor.

It catalyses the reaction ADP-D-glycero-beta-D-manno-heptose = ADP-L-glycero-beta-D-manno-heptose. It functions in the pathway nucleotide-sugar biosynthesis; ADP-L-glycero-beta-D-manno-heptose biosynthesis; ADP-L-glycero-beta-D-manno-heptose from D-glycero-beta-D-manno-heptose 7-phosphate: step 4/4. Functionally, catalyzes the interconversion between ADP-D-glycero-beta-D-manno-heptose and ADP-L-glycero-beta-D-manno-heptose via an epimerization at carbon 6 of the heptose. The protein is ADP-L-glycero-D-manno-heptose-6-epimerase of Cupriavidus necator (strain ATCC 17699 / DSM 428 / KCTC 22496 / NCIMB 10442 / H16 / Stanier 337) (Ralstonia eutropha).